The primary structure comprises 550 residues: Probable asparagine synthetase [glutamine-hydrolyzing] (550 aa).

The active-site For GATase activity is C2. A Glutamine amidotransferase type-2 domain is found at 2–189 (CGIICFIQYG…PNQYVTIDLS (188 aa)). L-glutamine contacts are provided by residues 53–57 (RLAIM), 78–80 (NGE), and D100. The Asparagine synthetase domain occupies 213-530 (YYQSHKSLID…GGRDHIIPHY (318 aa)). ATP is bound by residues L256, V284, and 360–361 (SG).

The catalysed reaction is L-aspartate + L-glutamine + ATP + H2O = L-asparagine + L-glutamate + AMP + diphosphate + H(+). It functions in the pathway amino-acid biosynthesis; L-asparagine biosynthesis; L-asparagine from L-aspartate (L-Gln route): step 1/1. The chain is Probable asparagine synthetase [glutamine-hydrolyzing] from Acanthamoeba polyphaga mimivirus (APMV).